The primary structure comprises 245 residues: 1-(5-phosphoribosyl)-5-[(5-phosphoribosylamino)methylideneamino] imidazole-4-carboxamide isomerase (245 aa).

D7 serves as the catalytic Proton acceptor. Catalysis depends on D129, which acts as the Proton donor.

Belongs to the HisA/HisF family.

The protein localises to the cytoplasm. It carries out the reaction 1-(5-phospho-beta-D-ribosyl)-5-[(5-phospho-beta-D-ribosylamino)methylideneamino]imidazole-4-carboxamide = 5-[(5-phospho-1-deoxy-D-ribulos-1-ylimino)methylamino]-1-(5-phospho-beta-D-ribosyl)imidazole-4-carboxamide. It functions in the pathway amino-acid biosynthesis; L-histidine biosynthesis; L-histidine from 5-phospho-alpha-D-ribose 1-diphosphate: step 4/9. In Shewanella sp. (strain MR-4), this protein is 1-(5-phosphoribosyl)-5-[(5-phosphoribosylamino)methylideneamino] imidazole-4-carboxamide isomerase.